The primary structure comprises 309 residues: Coproporphyrin III ferrochelatase (309 aa).

Fe-coproporphyrin III-binding positions include Tyr12, Arg29, 45–46 (RY), Ser53, and Tyr124. Positions 182 and 263 each coordinate Fe(2+).

The protein belongs to the ferrochelatase family.

It localises to the cytoplasm. It catalyses the reaction Fe-coproporphyrin III + 2 H(+) = coproporphyrin III + Fe(2+). It participates in porphyrin-containing compound metabolism; protoheme biosynthesis. Involved in coproporphyrin-dependent heme b biosynthesis. Catalyzes the insertion of ferrous iron into coproporphyrin III to form Fe-coproporphyrin III. The chain is Coproporphyrin III ferrochelatase from Listeria innocua serovar 6a (strain ATCC BAA-680 / CLIP 11262).